The following is a 547-amino-acid chain: ATP synthase subunit alpha (547 aa).

ATP is bound at residue 173-180 (GDRQTGKT).

This sequence belongs to the ATPase alpha/beta chains family. In terms of assembly, F-type ATPases have 2 components, CF(1) - the catalytic core - and CF(0) - the membrane proton channel. CF(1) has five subunits: alpha(3), beta(3), gamma(1), delta(1), epsilon(1). CF(0) has three main subunits: a(1), b(2) and c(9-12). The alpha and beta chains form an alternating ring which encloses part of the gamma chain. CF(1) is attached to CF(0) by a central stalk formed by the gamma and epsilon chains, while a peripheral stalk is formed by the delta and b chains.

The protein resides in the cell membrane. It catalyses the reaction ATP + H2O + 4 H(+)(in) = ADP + phosphate + 5 H(+)(out). Functionally, produces ATP from ADP in the presence of a proton gradient across the membrane. The alpha chain is a regulatory subunit. This is ATP synthase subunit alpha from Thermobifida fusca (strain YX).